We begin with the raw amino-acid sequence, 53 residues long: uncharacterized protein (53 aa).

The helical transmembrane segment at 20–42 (ILFPVLLVFDTILIVVGIALILF) threads the bilayer.

It localises to the membrane. This is an uncharacterized protein from Archaeoglobus fulgidus (strain ATCC 49558 / DSM 4304 / JCM 9628 / NBRC 100126 / VC-16).